The following is a 338-amino-acid chain: Probable protein S-acyltransferase 1 (338 aa).

2 consecutive transmembrane segments (helical) span residues 32-52 (DASSLLLTTCMIGGPAIAFSI) and 68-88 (LTLIGAILLTFMAFTFLFLTS). The region spanning 142–192 (KFCDTCQLYRPPRAFHCSICNNCVQRFDHHCPWVGQCIALRNYPFFVCFLS) is the DHHC domain. Cysteine 172 functions as the S-palmitoyl cysteine intermediate in the catalytic mechanism. Helical transmembrane passes span 186-206 (FFVCFLSCSTLLCIYVFVFSW) and 225-245 (ILGVLGLYCFVSVWFVGGLTV). Positions 319–338 (FGPKDTKMSSGKSDSEARER) are disordered. Over residues 320–338 (GPKDTKMSSGKSDSEARER) the composition is skewed to basic and acidic residues.

The protein belongs to the DHHC palmitoyltransferase family.

Its subcellular location is the endosome membrane. It catalyses the reaction L-cysteinyl-[protein] + hexadecanoyl-CoA = S-hexadecanoyl-L-cysteinyl-[protein] + CoA. Functionally, palmitoyl acyltransferase. In Arabidopsis thaliana (Mouse-ear cress), this protein is Probable protein S-acyltransferase 1 (PAT01).